The chain runs to 342 residues: Immune-associated nucleotide-binding protein 9 (342 aa).

An AIG1-type G domain is found at N22–Q229. A G1 region spans residues G31 to S38. Residues G31–A39 and S52 contribute to the GTP site. The interval G58 to T62 is G2. Positions D80–G83 are G3. The segment at T149–D152 is G4. A G5 region spans residues N188–K190. N189 provides a ligand contact to GTP. A coiled-coil region spans residues E276–L342.

The protein belongs to the TRAFAC class TrmE-Era-EngA-EngB-Septin-like GTPase superfamily. AIG1/Toc34/Toc159-like paraseptin GTPase family. IAN subfamily. In terms of tissue distribution, mainly expressed in leaves.

The chain is Immune-associated nucleotide-binding protein 9 from Arabidopsis thaliana (Mouse-ear cress).